Reading from the N-terminus, the 398-residue chain is Protein RecA (398 aa).

83-90 (GPESSGKT) is a binding site for ATP. The tract at residues 351–398 (AGQKNDKKSKLEEKANAGAGISEASEPDSSAEEDFEEFAPIDIGSLGE) is disordered. The span at 354–365 (KNDKKSKLEEKA) shows a compositional bias: basic and acidic residues. Acidic residues predominate over residues 375–389 (SEPDSSAEEDFEEFA).

Belongs to the RecA family.

The protein resides in the cytoplasm. Can catalyze the hydrolysis of ATP in the presence of single-stranded DNA, the ATP-dependent uptake of single-stranded DNA by duplex DNA, and the ATP-dependent hybridization of homologous single-stranded DNAs. It interacts with LexA causing its activation and leading to its autocatalytic cleavage. The polypeptide is Protein RecA (Ruminococcus albus (strain ATCC 27210 / DSM 20455 / JCM 14654 / NCDO 2250 / 7)).